The chain runs to 266 residues: Ribosomal RNA small subunit methyltransferase A (266 aa).

Positions 12, 14, 39, 61, 87, and 107 each coordinate S-adenosyl-L-methionine.

This sequence belongs to the class I-like SAM-binding methyltransferase superfamily. rRNA adenine N(6)-methyltransferase family. RsmA subfamily.

The protein localises to the cytoplasm. It catalyses the reaction adenosine(1518)/adenosine(1519) in 16S rRNA + 4 S-adenosyl-L-methionine = N(6)-dimethyladenosine(1518)/N(6)-dimethyladenosine(1519) in 16S rRNA + 4 S-adenosyl-L-homocysteine + 4 H(+). Its function is as follows. Specifically dimethylates two adjacent adenosines (A1518 and A1519) in the loop of a conserved hairpin near the 3'-end of 16S rRNA in the 30S particle. May play a critical role in biogenesis of 30S subunits. In Nitratidesulfovibrio vulgaris (strain DP4) (Desulfovibrio vulgaris), this protein is Ribosomal RNA small subunit methyltransferase A.